A 493-amino-acid polypeptide reads, in one-letter code: Cysteine--tRNA ligase (493 aa).

Cys-29 provides a ligand contact to Zn(2+). A 'HIGH' region motif is present at residues 31–41; it reads VTVYDLCHLGH. A disordered region spans residues 154–179; it reads KLSGRDPDDQQQGASGRTADGEESRK. Residues Cys-213, His-238, and Glu-242 each coordinate Zn(2+). The short motif at 270 to 274 is the 'KMSKS' region element; sequence KMSKS. An ATP-binding site is contributed by Lys-273.

This sequence belongs to the class-I aminoacyl-tRNA synthetase family. As to quaternary structure, monomer. Requires Zn(2+) as cofactor.

Its subcellular location is the cytoplasm. The enzyme catalyses tRNA(Cys) + L-cysteine + ATP = L-cysteinyl-tRNA(Cys) + AMP + diphosphate. This Synechococcus sp. (strain CC9605) protein is Cysteine--tRNA ligase.